The primary structure comprises 63 residues: Large ribosomal subunit protein uL30 (63 aa).

It belongs to the universal ribosomal protein uL30 family. In terms of assembly, part of the 50S ribosomal subunit.

This Rickettsia canadensis (strain McKiel) protein is Large ribosomal subunit protein uL30.